We begin with the raw amino-acid sequence, 40 residues long: Natriuretic peptide HsNP-b (40 aa).

A propeptide spanning residues 1–8 (SGSKTAKI) is cleaved from the precursor. The interval 1-40 (SGSKTAKIGDGCFGVPIDHIGSTTDLGCGRPRPKPTPRGS) is disordered. Cys-12 and Cys-28 are joined by a disulfide. Positions 31–40 (PRPKPTPRGS) are enriched in basic residues.

It belongs to the natriuretic peptide family. In terms of tissue distribution, expressed by the venom gland.

The protein resides in the secreted. Snake venom natriuretic peptide that targets both NPR1 and NPR2. Exhibits hypotensive and vasodepressor activities. The sequence is that of Natriuretic peptide HsNP-b from Hoplocephalus stephensii (Stephens's banded snake).